The primary structure comprises 822 residues: Probable phosphoketolase (822 aa).

It belongs to the XFP family. The cofactor is thiamine diphosphate.

In Lactococcus lactis subsp. lactis (strain IL1403) (Streptococcus lactis), this protein is Probable phosphoketolase.